The following is a 255-amino-acid chain: DNA repair protein RecO (255 aa).

This sequence belongs to the RecO family.

In terms of biological role, involved in DNA repair and RecF pathway recombination. The sequence is that of DNA repair protein RecO from Listeria monocytogenes serotype 4a (strain HCC23).